Consider the following 146-residue polypeptide: Hemoglobin subunit beta (146 aa).

V1 is subject to N-acetylvaline. The 145-residue stretch at 2–146 (HLTADEKSAV…VATALGHKYH (145 aa)) folds into the Globin domain. T12 bears the Phosphothreonine mark. S44 carries the post-translational modification Phosphoserine. At K59 the chain carries N6-acetyllysine. H63 is a binding site for heme b. Position 82 is an N6-acetyllysine (K82). A heme b-binding site is contributed by H92. C93 is modified (S-nitrosocysteine). K144 is modified (N6-acetyllysine).

It belongs to the globin family. Heterotetramer of two alpha chains and two beta chains. In terms of tissue distribution, red blood cells.

In terms of biological role, involved in oxygen transport from the lung to the various peripheral tissues. This is Hemoglobin subunit beta (HBB) from Antrozous pallidus (Pallid bat).